We begin with the raw amino-acid sequence, 37 residues long: Large ribosomal subunit protein bL36 (37 aa).

It belongs to the bacterial ribosomal protein bL36 family.

This chain is Large ribosomal subunit protein bL36, found in Synechococcus elongatus (strain ATCC 33912 / PCC 7942 / FACHB-805) (Anacystis nidulans R2).